The primary structure comprises 266 residues: Imidazole glycerol phosphate synthase subunit HisF (266 aa).

Active-site residues include Asp-11 and Asp-130.

The protein belongs to the HisA/HisF family. As to quaternary structure, heterodimer of HisH and HisF.

It is found in the cytoplasm. It carries out the reaction 5-[(5-phospho-1-deoxy-D-ribulos-1-ylimino)methylamino]-1-(5-phospho-beta-D-ribosyl)imidazole-4-carboxamide + L-glutamine = D-erythro-1-(imidazol-4-yl)glycerol 3-phosphate + 5-amino-1-(5-phospho-beta-D-ribosyl)imidazole-4-carboxamide + L-glutamate + H(+). Its pathway is amino-acid biosynthesis; L-histidine biosynthesis; L-histidine from 5-phospho-alpha-D-ribose 1-diphosphate: step 5/9. In terms of biological role, IGPS catalyzes the conversion of PRFAR and glutamine to IGP, AICAR and glutamate. The HisF subunit catalyzes the cyclization activity that produces IGP and AICAR from PRFAR using the ammonia provided by the HisH subunit. This Delftia acidovorans (strain DSM 14801 / SPH-1) protein is Imidazole glycerol phosphate synthase subunit HisF.